Here is a 407-residue protein sequence, read N- to C-terminus: MTTFSEKEKIQLLADIVELQTENNNEIDVCNYLKDLFDKYDIKSEILKVNEHRANFVAEIGSGSPILALSGHMDVVDAGNQDNWTYPPFQLTEKDDKLYGRGTTDMKGGLMALVIALIELKEQNQLPQGTIRLLATAGEEKEQEGAKLLADKGYLDDVDGLMIAEPTGSGIYYAHKGSMSCKVTATGKAVHSSVPFIGDNAIDTLLEFYNQFKEKYAELKKNDTKHELDVAPMFKSLIGKDISEEDANYASGLTAVCSIINGGKQFNSVPDEASLEFNVRPVPEYDNDFIESFFQNIINNVDSNKLSLDIPSNHRPVTSDKNSKLITTIKDVASSYVDKDDIFVSALVGATDASSFLGDNKDNVDLAIFGPGNPLMAHQIDEYIEKDMYLKYIDIFKEASIQYLKEK.

His72 is a Zn(2+) binding site. Residue Asp74 is part of the active site. Asp105 contacts Zn(2+). Glu139 serves as the catalytic Proton acceptor. The Zn(2+) site is built by Glu140, Glu165, and His378.

Belongs to the peptidase M20A family. Requires Zn(2+) as cofactor. It depends on Co(2+) as a cofactor.

It carries out the reaction N-succinyl-(2S,6S)-2,6-diaminopimelate + H2O = (2S,6S)-2,6-diaminopimelate + succinate. It participates in amino-acid biosynthesis; L-lysine biosynthesis via DAP pathway; LL-2,6-diaminopimelate from (S)-tetrahydrodipicolinate (succinylase route): step 3/3. This Staphylococcus aureus (strain MRSA252) protein is Probable succinyl-diaminopimelate desuccinylase (dapE).